We begin with the raw amino-acid sequence, 584 residues long: Protein BONZAI 3 (584 aa).

A disordered region spans residues Met-1–Pro-23. Gly-2 carries the N-myristoyl glycine lipid modification. C2 domains follow at residues His-34 to Leu-167 and Asn-178 to Tyr-305. Ca(2+) contacts are provided by Asp-67, Asp-73, Asp-126, Asp-128, and Asp-145. Positions Asn-344 to Leu-563 constitute a VWFA domain.

Belongs to the copine family. Interacts with BAP1 and BAP2. Requires Ca(2+) as cofactor. As to expression, expressed at an extremely low level.

The protein localises to the cell membrane. Its function is as follows. Negative regulator of cell death and defense responses. Repress a number of R genes and may have effects in promoting growth and development. May function in membrane trafficking and in fusion of vesicles with plasma membrane. The protein is Protein BONZAI 3 (BON3) of Arabidopsis thaliana (Mouse-ear cress).